Here is an 807-residue protein sequence, read N- to C-terminus: Ecotropic viral integration site 5 ortholog (807 aa).

The tract at residues 1–31 is disordered; sequence MTLTTTTTASSAESQAKMDVKGGALPGEENL. Thr33 bears the Phosphothreonine mark. A phosphoserine mark is found at Ser58 and Ser64. A Rab-GAP TBC domain is found at 116-300; sequence GIPHHFRAIV…RIMDVFLSEG (185 aa). Coiled coils occupy residues 352–463, 494–583, and 627–772; these read SIKL…ENNV, CLLE…ENQR, and REME…RGKF.

As to quaternary structure, interacts with Rab11.

It is found in the cytoplasm. Its subcellular location is the endosome. In terms of biological role, functions as a GTPase-activating protein (GAP). During border cell migration in the ovary, acts as a GAP for Rab11 and is necessary for the maintenance of active receptor tyrosine kinases at the leading edge. The chain is Ecotropic viral integration site 5 ortholog (Evi5) from Drosophila melanogaster (Fruit fly).